A 162-amino-acid polypeptide reads, in one-letter code: Ribosomal RNA large subunit methyltransferase H (162 aa).

Residues L78, G109, and 128–133 (LSALTL) each bind S-adenosyl-L-methionine.

Belongs to the RNA methyltransferase RlmH family. Homodimer.

Its subcellular location is the cytoplasm. It catalyses the reaction pseudouridine(1915) in 23S rRNA + S-adenosyl-L-methionine = N(3)-methylpseudouridine(1915) in 23S rRNA + S-adenosyl-L-homocysteine + H(+). Its function is as follows. Specifically methylates the pseudouridine at position 1915 (m3Psi1915) in 23S rRNA. The polypeptide is Ribosomal RNA large subunit methyltransferase H (Psychrobacter cryohalolentis (strain ATCC BAA-1226 / DSM 17306 / VKM B-2378 / K5)).